A 129-amino-acid polypeptide reads, in one-letter code: Small ribosomal subunit protein uS11 (129 aa).

Belongs to the universal ribosomal protein uS11 family. Part of the 30S ribosomal subunit.

Functionally, located on the platform of the 30S subunit. The protein is Small ribosomal subunit protein uS11 of Methanocaldococcus jannaschii (strain ATCC 43067 / DSM 2661 / JAL-1 / JCM 10045 / NBRC 100440) (Methanococcus jannaschii).